A 195-amino-acid polypeptide reads, in one-letter code: CD70 antigen (195 aa).

The Cytoplasmic portion of the chain corresponds to 1–23 (MPEEGRPCPWVRWSGTAFQRQWP). The chain crosses the membrane as a helical; Signal-anchor for type II membrane protein span at residues 24–44 (WLLLVVFITVFCCWFHCSGLL). Topologically, residues 45–195 (SKQQQRLLEH…TFFGVQWICP (151 aa)) are extracellular. Positions 58-193 (HTAELQLNLT…DETFFGVQWI (136 aa)) constitute a THD domain. N-linked (GlcNAc...) asparagine glycans are attached at residues N65 and N116. Intrachain disulfides connect C117-C153 and C135-C170. N172 carries N-linked (GlcNAc...) asparagine glycosylation.

The protein belongs to the tumor necrosis factor family. As to quaternary structure, homotrimer. In terms of processing, N-glycosylated. Very low level of expression. Detected in splenocytes and thymocytes.

Its subcellular location is the cell membrane. Its function is as follows. Expressed at the plasma membrane of B cells, it is the ligand of the CD27 receptor which is specifically expressed at the surface of T cells. The CD70-CD27 signaling pathway mediates antigen-specific T cell activation and expansion which in turn provides immune surveillance of B cells. The polypeptide is CD70 antigen (Mus musculus (Mouse)).